A 381-amino-acid polypeptide reads, in one-letter code: MKDFLPFSKPAIGDEEIAAVSEVLRSGWITTGPQNQALEQEFCQATGARHAIAVCSATAGMHVTLMALGIGPGDEVITPSMTWVSTLNIITLLGATPVMIDVGRDTLMVTPEAIADAITPRTKAIIPVHFAGAPVDLDPIRALAQRQGIALIEDAAHAIGTAYRGEPIGQRGTAIFSFHAIKNVTCAEGGMVVTDDDRLAQQVRSLKFHGLGVDAYDRQTHGRAPQAEVVTPGYKYNLADINAAIARVQLAKLPELNARRARLAAYYLQQLAQHQLPFSPLNTPEWPHQHAWHLFIIRCDEARSGVDRDRLMQALKERNIGSGLHFRAAHTQKYYRESYPQLRLAQTEWNSQRICSLPLFPDMTEADVDRVIAALKEIIEQ.

K182 is modified (N6-(pyridoxal phosphate)lysine).

This sequence belongs to the DegT/DnrJ/EryC1 family. ArnB subfamily. In terms of assembly, homodimer. Pyridoxal 5'-phosphate serves as cofactor.

It carries out the reaction UDP-4-amino-4-deoxy-beta-L-arabinose + 2-oxoglutarate = UDP-beta-L-threo-pentopyranos-4-ulose + L-glutamate. The protein operates within nucleotide-sugar biosynthesis; UDP-4-deoxy-4-formamido-beta-L-arabinose biosynthesis; UDP-4-deoxy-4-formamido-beta-L-arabinose from UDP-alpha-D-glucuronate: step 2/3. Its pathway is bacterial outer membrane biogenesis; lipopolysaccharide biosynthesis. Functionally, catalyzes the conversion of UDP-4-keto-arabinose (UDP-Ara4O) to UDP-4-amino-4-deoxy-L-arabinose (UDP-L-Ara4N). The modified arabinose is attached to lipid A and is required for resistance to polymyxin and cationic antimicrobial peptides. This chain is UDP-4-amino-4-deoxy-L-arabinose--oxoglutarate aminotransferase, found in Edwardsiella ictaluri (strain 93-146).